The chain runs to 315 residues: Ribosomal RNA small subunit methyltransferase H (315 aa).

S-adenosyl-L-methionine is bound by residues 37–39, Asp57, Phe83, Asp105, and Gln112; that span reads GGH.

This sequence belongs to the methyltransferase superfamily. RsmH family.

The protein resides in the cytoplasm. It catalyses the reaction cytidine(1402) in 16S rRNA + S-adenosyl-L-methionine = N(4)-methylcytidine(1402) in 16S rRNA + S-adenosyl-L-homocysteine + H(+). Specifically methylates the N4 position of cytidine in position 1402 (C1402) of 16S rRNA. This Pseudomonas putida (strain GB-1) protein is Ribosomal RNA small subunit methyltransferase H.